The primary structure comprises 126 residues: Aspartate 1-decarboxylase (126 aa).

Residue Ser-25 is the Schiff-base intermediate with substrate; via pyruvic acid of the active site. At Ser-25 the chain carries Pyruvic acid (Ser). Thr-57 contributes to the substrate binding site. Tyr-58 functions as the Proton donor in the catalytic mechanism. 73–75 (GGA) is a substrate binding site.

Belongs to the PanD family. In terms of assembly, heterooctamer of four alpha and four beta subunits. Pyruvate serves as cofactor. Post-translationally, is synthesized initially as an inactive proenzyme, which is activated by self-cleavage at a specific serine bond to produce a beta-subunit with a hydroxyl group at its C-terminus and an alpha-subunit with a pyruvoyl group at its N-terminus.

It localises to the cytoplasm. It catalyses the reaction L-aspartate + H(+) = beta-alanine + CO2. It participates in cofactor biosynthesis; (R)-pantothenate biosynthesis; beta-alanine from L-aspartate: step 1/1. Functionally, catalyzes the pyruvoyl-dependent decarboxylation of aspartate to produce beta-alanine. The polypeptide is Aspartate 1-decarboxylase (Xylella fastidiosa (strain Temecula1 / ATCC 700964)).